A 198-amino-acid chain; its full sequence is Glutamyl-tRNA(Gln) amidotransferase subunit C, mitochondrial (198 aa).

This sequence belongs to the GatC family. Subunit of the heterotrimeric GatCAB amidotransferase (AdT) complex, composed of A, B and C subunits.

It localises to the mitochondrion. The catalysed reaction is L-glutamyl-tRNA(Gln) + L-glutamine + ATP + H2O = L-glutaminyl-tRNA(Gln) + L-glutamate + ADP + phosphate + H(+). In terms of biological role, allows the formation of correctly charged Gln-tRNA(Gln) through the transamidation of misacylated Glu-tRNA(Gln) in the mitochondria. The reaction takes place in the presence of glutamine and ATP through an activated gamma-phospho-Glu-tRNA(Gln). The sequence is that of Glutamyl-tRNA(Gln) amidotransferase subunit C, mitochondrial from Caenorhabditis remanei (Caenorhabditis vulgaris).